Consider the following 100-residue polypeptide: MLSINLSLCAHKKGMGSSKNGRDSESKRLGVKASDGEFVLAGNIIVRQRGTKIHPGVNVGRGKDDTLFAKADGLVKFEKRGKDKKFASVYPVEIEQSVAE.

Positions 1 to 9 (MLSINLSLC) are excised as a propeptide.

Belongs to the bacterial ribosomal protein bL27 family. In terms of processing, the N-terminus is cleaved by ribosomal processing cysteine protease Prp.

This Clostridium acetobutylicum (strain ATCC 824 / DSM 792 / JCM 1419 / IAM 19013 / LMG 5710 / NBRC 13948 / NRRL B-527 / VKM B-1787 / 2291 / W) protein is Large ribosomal subunit protein bL27.